Reading from the N-terminus, the 142-residue chain is MPKYYCDYCDTFLTHDSPSVRKTHNGGRKHKDNVRMFYQKWMEDQAQKLVDQTARAFATNRMHGAVPRTTMGMAPVPPVGHHPMMGGPPGMPMMAPRPFPGPPVGFPGAPGLAPFPGPPMGLAGPPGMPPMMPRPPQQFRPM.

The Matrin-type zinc-finger motif lies at 4-36 (YYCDYCDTFLTHDSPSVRKTHNGGRKHKDNVRM).

Belongs to the U1 small nuclear ribonucleoprotein C family. In terms of assembly, U1 snRNP is composed of the 7 core Sm proteins B/B', D1, D2, D3, E, F and G that assemble in a heptameric protein ring on the Sm site of the small nuclear RNA to form the core snRNP, and at least 3 U1 snRNP-specific proteins U1-70K, U1-A and U1-C. U1-C interacts with U1 snRNA and the 5' splice-site region of the pre-mRNA.

It is found in the nucleus. Its function is as follows. Component of the spliceosomal U1 snRNP, which is essential for recognition of the pre-mRNA 5' splice-site and the subsequent assembly of the spliceosome. U1-C is directly involved in initial 5' splice-site recognition for both constitutive and regulated alternative splicing. The interaction with the 5' splice-site seems to precede base-pairing between the pre-mRNA and the U1 snRNA. Stimulates commitment or early (E) complex formation by stabilizing the base pairing of the 5' end of the U1 snRNA and the 5' splice-site region. This Caenorhabditis briggsae protein is U1 small nuclear ribonucleoprotein C.